The following is a 244-amino-acid chain: Anti-H(O) lectin 1 (244 aa).

N-linked (GlcNAc...) asparagine glycans are attached at residues Asn113 and Asn117. Glu127 and Asp129 together coordinate Mn(2+). Ca(2+) contacts are provided by Asp129, Tyr131, Asn137, and Asp142. The Mn(2+) site is built by Asp142 and His145.

Belongs to the leguminous lectin family. Homotetramer.

Its function is as follows. Di-N-acetylchitobiose-binding anti-H(O) lectin. The sequence is that of Anti-H(O) lectin 1 from Cytisophyllum sessilifolium (Sessile-leaved cytisus).